Here is a 174-residue protein sequence, read N- to C-terminus: MNIIDFFELSAGEWFSQRTIHNLVSGELQAGKSEVNVEILEKTDPTLINLCEQNQVDSSVTKLIGVKISWNGTNNKGQVKDVGSRMLIIIPNFDDLNQGQLLQNRGNGNSPKISGRYIMGSDDVLMLTTESEGLYVEERFWYLIPNLRLRTSVVNRPQGFSLASFCSEIRRVKS.

The protein belongs to the CpcS/CpeS biliprotein lyase family.

Its function is as follows. Covalently attaches a chromophore to Cys residue(s) of phycobiliproteins. This Trichodesmium erythraeum (strain IMS101) protein is Chromophore lyase CpcS/CpeS 1.